Consider the following 247-residue polypeptide: UDP-2,3-diacylglucosamine hydrolase (247 aa).

Mn(2+) contacts are provided by Asp8, His10, Asp41, Asn79, and His114. Position 79–80 (79–80 (NR)) interacts with substrate. 5 residues coordinate substrate: Asp122, Ser160, Asp171, Gln174, and His202. Residues His202 and His204 each coordinate Mn(2+).

This sequence belongs to the LpxH family. The cofactor is Mn(2+).

The protein localises to the cell inner membrane. The catalysed reaction is UDP-2-N,3-O-bis[(3R)-3-hydroxytetradecanoyl]-alpha-D-glucosamine + H2O = 2-N,3-O-bis[(3R)-3-hydroxytetradecanoyl]-alpha-D-glucosaminyl 1-phosphate + UMP + 2 H(+). Its pathway is glycolipid biosynthesis; lipid IV(A) biosynthesis; lipid IV(A) from (3R)-3-hydroxytetradecanoyl-[acyl-carrier-protein] and UDP-N-acetyl-alpha-D-glucosamine: step 4/6. Functionally, hydrolyzes the pyrophosphate bond of UDP-2,3-diacylglucosamine to yield 2,3-diacylglucosamine 1-phosphate (lipid X) and UMP by catalyzing the attack of water at the alpha-P atom. Involved in the biosynthesis of lipid A, a phosphorylated glycolipid that anchors the lipopolysaccharide to the outer membrane of the cell. This chain is UDP-2,3-diacylglucosamine hydrolase, found in Xanthomonas campestris pv. campestris (strain 8004).